A 451-amino-acid polypeptide reads, in one-letter code: MQETILNKIIKDKIDWIKYRKKIQPLIKFKNKINKETRNFYNSLKEKRPFFILECKKSSPSLGIIRKKFNLIEIANIYKNYASAISVLTDEKYFHGNIEYINVVRRCVSQPILCKDFFIDSYQVYLARYYSADAILLMLSVLNDSQYLELSRIAKELNMGVLTEINNIKELKRAIKLNASVIGINNRNLHDLSIDLNRTRTLSPLIKNKIIVSESGIKKNHQIKELSNIVHGFLIGSSLMYRTNLETNIKSLIIGDNKVCGLTRIIDAKIVESCGAVYGGLIFADNSLRKTNEKIAEKMIFENNLRFIGVFQNQDIEKIVNIAQRLSLYAVQLHGSENQKYINILRKKLCKKIKIWKAFSIQSTLPLLNWDHIDKYIFDSGSGGTNKTFNWSILKGSILENVILAGGINTDNVLIASQLNCSGLDFNSGVEKSPGIKDHKKISLIFKKLTF.

An indole-3-glycerol phosphate synthase region spans residues 1–256 (MQETILNKII…TNIKSLIIGD (256 aa)). The interval 257-451 (NKVCGLTRII…ISLIFKKLTF (195 aa)) is N-(5'-phosphoribosyl)anthranilate isomerase.

In the N-terminal section; belongs to the TrpC family. The protein in the C-terminal section; belongs to the TrpF family. In terms of assembly, monomer.

The catalysed reaction is N-(5-phospho-beta-D-ribosyl)anthranilate = 1-(2-carboxyphenylamino)-1-deoxy-D-ribulose 5-phosphate. It catalyses the reaction 1-(2-carboxyphenylamino)-1-deoxy-D-ribulose 5-phosphate + H(+) = (1S,2R)-1-C-(indol-3-yl)glycerol 3-phosphate + CO2 + H2O. Its pathway is amino-acid biosynthesis; L-tryptophan biosynthesis; L-tryptophan from chorismate: step 3/5. It participates in amino-acid biosynthesis; L-tryptophan biosynthesis; L-tryptophan from chorismate: step 4/5. Functionally, bifunctional enzyme that catalyzes two sequential steps of tryptophan biosynthetic pathway. The first reaction is catalyzed by the isomerase, coded by the TrpF domain; the second reaction is catalyzed by the synthase, coded by the TrpC domain. The protein is Tryptophan biosynthesis protein TrpCF (trpC) of Buchnera aphidicola subsp. Schizaphis graminum (strain Sg).